Consider the following 172-residue polypeptide: uncharacterized protein (172 aa).

The Lumenal portion of the chain corresponds to 1-101 (MEHVSKRSIG…RYDINTRPLV (101 aa)). A helical membrane pass occupies residues 102-122 (VVLAISIVFFGCLLVLKDIII). At 123–145 (QSSENILSVSKWKIIGASFMGTP) the chain is on the cytoplasmic side. A helical membrane pass occupies residues 146 to 164 (YTGLLTGLVGPLLSPFSAV). At 165–172 (SSWLSFIF) the chain is on the lumenal side.

It is found in the endoplasmic reticulum membrane. This is an uncharacterized protein from Saccharomyces cerevisiae (strain ATCC 204508 / S288c) (Baker's yeast).